A 476-amino-acid chain; its full sequence is ATP synthase subunit beta, chloroplastic (476 aa).

153–160 (GGAGVGKT) is an ATP binding site.

Belongs to the ATPase alpha/beta chains family. F-type ATPases have 2 components, CF(1) - the catalytic core - and CF(0) - the membrane proton channel. CF(1) has five subunits: alpha(3), beta(3), gamma(1), delta(1), epsilon(1). CF(0) has four main subunits: a(1), b(1), b'(1) and c(9-12).

It localises to the plastid. It is found in the chloroplast thylakoid membrane. The catalysed reaction is ATP + H2O + 4 H(+)(in) = ADP + phosphate + 5 H(+)(out). Functionally, produces ATP from ADP in the presence of a proton gradient across the membrane. The catalytic sites are hosted primarily by the beta subunits. The polypeptide is ATP synthase subunit beta, chloroplastic (Dicksonia antarctica (Australian tree fern)).